Here is a 195-residue protein sequence, read N- to C-terminus: Probable GTP-binding protein EngB (195 aa).

In terms of domain architecture, EngB-type G spans Gly-22 to Arg-195. GTP is bound by residues Gly-30–Ser-37, Gly-57–Thr-61, Asp-75–Gly-78, Thr-142–Asp-145, and Phe-174–Ser-176. Ser-37 and Thr-59 together coordinate Mg(2+).

Belongs to the TRAFAC class TrmE-Era-EngA-EngB-Septin-like GTPase superfamily. EngB GTPase family. Mg(2+) serves as cofactor.

Its function is as follows. Necessary for normal cell division and for the maintenance of normal septation. The chain is Probable GTP-binding protein EngB from Bacillus velezensis (strain DSM 23117 / BGSC 10A6 / LMG 26770 / FZB42) (Bacillus amyloliquefaciens subsp. plantarum).